Here is a 234-residue protein sequence, read N- to C-terminus: Uridylate kinase (234 aa).

9–12 (KLSG) is an ATP binding site. Residue Gly-51 coordinates UMP. ATP-binding residues include Gly-52 and Arg-56. Residues Asp-71 and 132–139 (CGNPFFTT) contribute to the UMP site. Residues Thr-159, Tyr-165, and Asp-168 each coordinate ATP.

Belongs to the UMP kinase family. As to quaternary structure, homohexamer.

It localises to the cytoplasm. The enzyme catalyses UMP + ATP = UDP + ADP. It functions in the pathway pyrimidine metabolism; CTP biosynthesis via de novo pathway; UDP from UMP (UMPK route): step 1/1. Its activity is regulated as follows. Inhibited by UTP. Its function is as follows. Catalyzes the reversible phosphorylation of UMP to UDP. The chain is Uridylate kinase from Prochlorococcus marinus (strain MIT 9301).